The primary structure comprises 220 residues: N-(5'-phosphoribosyl)anthranilate isomerase (220 aa).

This sequence belongs to the TrpF family.

It catalyses the reaction N-(5-phospho-beta-D-ribosyl)anthranilate = 1-(2-carboxyphenylamino)-1-deoxy-D-ribulose 5-phosphate. The protein operates within amino-acid biosynthesis; L-tryptophan biosynthesis; L-tryptophan from chorismate: step 3/5. This chain is N-(5'-phosphoribosyl)anthranilate isomerase, found in Xylella fastidiosa (strain M12).